The sequence spans 858 residues: Leucine--tRNA ligase (858 aa).

The 'HIGH' region motif lies at 42-52; it reads PYPSGRLHMGH. The short motif at 618–622 is the 'KMSKS' region element; the sequence is KMSKS. Residue K621 participates in ATP binding.

Belongs to the class-I aminoacyl-tRNA synthetase family.

Its subcellular location is the cytoplasm. The catalysed reaction is tRNA(Leu) + L-leucine + ATP = L-leucyl-tRNA(Leu) + AMP + diphosphate. The chain is Leucine--tRNA ligase from Photobacterium profundum (strain SS9).